A 166-amino-acid polypeptide reads, in one-letter code: MITYKNILIAVDGSHEAEWAFNRAVGVAKRNDAKLTIVNVIDSRTYSSYEVYDAQFTEKSKHFAEELLNGYKEVATNAGVKDVETRLEFGSPKSIIPKKLAHEINADLIMSGTSGLNAVERFIVGSVSESIVRHAPCDVLVVRTEELPADFQPQVATTQLREKYQN.

This sequence belongs to the universal stress protein A family.

It localises to the cytoplasm. The polypeptide is Putative universal stress protein SA1532 (Staphylococcus aureus (strain N315)).